Consider the following 134-residue polypeptide: Holo-[acyl-carrier-protein] synthase (134 aa).

Asp8 and Glu58 together coordinate Mg(2+).

Belongs to the P-Pant transferase superfamily. AcpS family. The cofactor is Mg(2+).

The protein localises to the cytoplasm. The enzyme catalyses apo-[ACP] + CoA = holo-[ACP] + adenosine 3',5'-bisphosphate + H(+). In terms of biological role, transfers the 4'-phosphopantetheine moiety from coenzyme A to a Ser of acyl-carrier-protein. The chain is Holo-[acyl-carrier-protein] synthase from Ruminiclostridium cellulolyticum (strain ATCC 35319 / DSM 5812 / JCM 6584 / H10) (Clostridium cellulolyticum).